The sequence spans 389 residues: MKHYSATLALLPLTLALFLPQAAHAHGSMETPPSRVYGCFLEGPENPKSAACKAAVAAGGTQALYDWNGVNQGNANGNHQAVVPDGQLCGAGKALFKGLNLARSDWPSTAIAPDASGNFQFVYKASAPHATRYFDFYITKDGYNPEKPLAWSDLEPAPFCSITSVKLENGTYRMNCPLPQGKTGKHVIYNVWQRSDSPEAFYACIDVSFSGAVANPWQALGNLRAQQDLPAGATVTLRLFDAQGRDAQRHSLTLAQGANGAKQWPLALAQKVNQDSTLVNIGVLDAYGAVSPVASSQDNQVYVRQAGYRFQVDIELPVEGGGEQPGGDGKVDFDYPQGLQQYDAGTVVRGADGKRYQCKPYPNSGWCKGWDLYYAPGKGMAWQDAWTLL.

The first 25 residues, 1–25, serve as a signal peptide directing secretion; the sequence is MKHYSATLALLPLTLALFLPQAAHA. The 183-residue stretch at 26–208 folds into the Chitin-binding type-4 domain; it reads HGSMETPPSR…EAFYACIDVS (183 aa).

Post-translationally, can be detected in the extracellular supernatant as a 43 kDa protein and a 23 kDa protein, both proteins have the same N-terminus. Only the larger protein binds chitin, which may protect it from further processing and/or degradation by elastase (lasB). It is not clear whether the short form is functional or a degradation product.

The protein localises to the secreted. Functionally, binds chitin but does not hydrolyze it, has no detectable protease or staphylolytic activity. The chain is Chitin-binding protein CbpD from Pseudomonas aeruginosa (strain ATCC 15692 / DSM 22644 / CIP 104116 / JCM 14847 / LMG 12228 / 1C / PRS 101 / PAO1).